The sequence spans 403 residues: Na(+)-translocating NADH-quinone reductase subunit B (403 aa).

The next 4 helical transmembrane spans lie at 56 to 76 (MMIL…WNTG), 121 to 141 (AYFL…EVLF), 164 to 184 (LPPS…VVIG), and 195 to 212 (FLNP…AYPA). T230 carries the FMN phosphoryl threonine modification. Helical transmembrane passes span 237–257 (AGGV…FLGI), 265–285 (TSTL…IAAW), 287–307 (IVAG…LIGS), 312–332 (MFAM…GTLF), 348–368 (WAFG…NPAF), and 371–391 (GMML…HFVV).

The protein belongs to the NqrB/RnfD family. As to quaternary structure, composed of six subunits; NqrA, NqrB, NqrC, NqrD, NqrE and NqrF. It depends on FMN as a cofactor.

The protein resides in the cell inner membrane. It catalyses the reaction a ubiquinone + n Na(+)(in) + NADH + H(+) = a ubiquinol + n Na(+)(out) + NAD(+). In terms of biological role, NQR complex catalyzes the reduction of ubiquinone-1 to ubiquinol by two successive reactions, coupled with the transport of Na(+) ions from the cytoplasm to the periplasm. NqrA to NqrE are probably involved in the second step, the conversion of ubisemiquinone to ubiquinol. This chain is Na(+)-translocating NADH-quinone reductase subunit B, found in Azotobacter vinelandii (strain DJ / ATCC BAA-1303).